The following is a 420-amino-acid chain: MKYSLLRGMQDIFSEQIYLWQHIEEHARKILENYNFQEIRTPIVENAELFLRSIGEDTDIVEKEMYVFQDKKGRKVALRPEGTASVVRAYIQHNFFNNPPPQKFYYIGPMFRYERPQKGRFRQFHQIGVECFGVSSSWIDAELIYMLKLFLEKLNINNLTYEINSLGCKRCRPQYRKVLFSFLADKVNQLCIDCKRRFEKNPLRVLDCKVPSCKESLKNTPLIVDFLCQDCKEHFLSLQKELDEMNISYAVNPKIVRGLDYYTRTVFEVTTTMLGAQNAVAAGGRYDDLVELFGGPTTPAAGFAIGMERLIEICSNSLLIKPKKPFVYVAYIGSSVEKEAKKVVNFLRNNNIPTETAYEKLSLKSQLRKADRVGANIVIIIGEDEIKKSVYIWKNMKDGSQGEASLNELLELIRRKYDTE.

It belongs to the class-II aminoacyl-tRNA synthetase family. In terms of assembly, homodimer.

The protein resides in the cytoplasm. The enzyme catalyses tRNA(His) + L-histidine + ATP = L-histidyl-tRNA(His) + AMP + diphosphate + H(+). The sequence is that of Histidine--tRNA ligase from Thermodesulfovibrio yellowstonii (strain ATCC 51303 / DSM 11347 / YP87).